Here is a 662-residue protein sequence, read N- to C-terminus: FAST kinase domain-containing protein 3, mitochondrial (662 aa).

The RAP domain maps to 591-649; sequence IALCIDGPKRFCSNSKHLLGKEAIKQRHLQLLGYQVVQIPYHEIGMLKSRRELVEYLQR.

Belongs to the FAST kinase family. As to expression, expression detected in spleen, thymus, testis, ovary, colon, heart, smooth muscle, kidney, brain, lung, liver and white adipose tissue with highest expression in liver and thyroid.

The protein localises to the mitochondrion. Its function is as follows. Required for normal mitochondrial respiration. Increases steady-state levels and half-lives of a subset of mature mitochondrial mRNAs MT-ND2, MT-ND3, MT-CYTB, MT-CO2, and MT-ATP8/6. Promotes MT-CO1 mRNA translation and increases mitochondrial complex IV assembly and activity. This Homo sapiens (Human) protein is FAST kinase domain-containing protein 3, mitochondrial (FASTKD3).